A 341-amino-acid chain; its full sequence is L-threonine 3-dehydrogenase (341 aa).

Position 38 (Cys38) interacts with Zn(2+). Active-site charge relay system residues include Thr40 and His43. Zn(2+) is bound by residues His63, Glu64, Cys93, Cys96, Cys99, and Cys107. Residues Ile175, Asp195, Arg200, 262–264 (LGI), and 286–287 (IY) each bind NAD(+).

Belongs to the zinc-containing alcohol dehydrogenase family. Homotetramer. Zn(2+) serves as cofactor.

The protein resides in the cytoplasm. The enzyme catalyses L-threonine + NAD(+) = (2S)-2-amino-3-oxobutanoate + NADH + H(+). It participates in amino-acid degradation; L-threonine degradation via oxydo-reductase pathway; glycine from L-threonine: step 1/2. In terms of biological role, catalyzes the NAD(+)-dependent oxidation of L-threonine to 2-amino-3-ketobutyrate. This Shewanella frigidimarina (strain NCIMB 400) protein is L-threonine 3-dehydrogenase.